A 198-amino-acid polypeptide reads, in one-letter code: MAAITAAMVKELREKTAAGMMDCKKALQECDGDEAKAVDWLRQKGLSKAAKKADRATSEGLIGSYIHSNGKIGVMVELKCETDFVARNEQFIELAKNLAMQIAATNPVAVDENGVDAELIERERAVYREKALAEGKPENIVEKIVDGAIKKYYKEVCLLEQPFIRDDKKVIRDLLNDTIATLGENITVGRFCRFQLGA.

Positions 82-85 (TDFV) are involved in Mg(2+) ion dislocation from EF-Tu.

The protein belongs to the EF-Ts family.

It is found in the cytoplasm. In terms of biological role, associates with the EF-Tu.GDP complex and induces the exchange of GDP to GTP. It remains bound to the aminoacyl-tRNA.EF-Tu.GTP complex up to the GTP hydrolysis stage on the ribosome. This chain is Elongation factor Ts, found in Oleidesulfovibrio alaskensis (strain ATCC BAA-1058 / DSM 17464 / G20) (Desulfovibrio alaskensis).